Reading from the N-terminus, the 355-residue chain is MPIDTPLIPHKPISRYRSGRLEGLESESSSESDYEEVSDSHDQENSISSSRHVITPVFEKEGISETKTSSNFQNINPVQTIDNSASEYETDASSAEGGSNSAASSSEEEDSSDSEYEMELRRRTLLLPPKFTSKVIKNRAKANEEDTEVLKKVTSQKILEETIKRELLLKETKNNNELLNDIDDTDGIDPQSEYELWKLRHLLRKKRDKEKSLELEREKMAIEERRLMNSEEREAQDLKDAEASRRGKKKSSMQFLQKYYHKGAFYQNEDIVSKRDYSEATEGEVLNKDLLPKPMQIRGDLFAKAGQTRWTHLANEDTTKEGSAWYDPKNPILQKNLHRLGGLHSDSPLSKRKRT.

3 disordered regions span residues 1 to 121, 226 to 253, and 336 to 355; these read MPID…MELR, RLMN…KSSM, and NLHR…RKRT. The span at 24-37 shows a compositional bias: acidic residues; the sequence is LESESSSESDYEEV. Positions 65–87 are enriched in polar residues; sequence ETKTSSNFQNINPVQTIDNSASE. Residues 91–105 are compositionally biased toward low complexity; that stretch reads DASSAEGGSNSAASS. Residues 106-117 show a composition bias toward acidic residues; it reads SEEEDSSDSEYE. Residues 226-245 are compositionally biased toward basic and acidic residues; the sequence is RLMNSEEREAQDLKDAEASR.

This is an uncharacterized protein from Schizosaccharomyces pombe (strain 972 / ATCC 24843) (Fission yeast).